The following is a 311-amino-acid chain: tRNA dimethylallyltransferase (311 aa).

10-17 is an ATP binding site; it reads GPTAVGKS. 12–17 is a binding site for substrate; it reads TAVGKS. Residues 35-38 are interaction with substrate tRNA; it reads DSMQ.

It belongs to the IPP transferase family. As to quaternary structure, monomer. Mg(2+) is required as a cofactor.

It carries out the reaction adenosine(37) in tRNA + dimethylallyl diphosphate = N(6)-dimethylallyladenosine(37) in tRNA + diphosphate. Its function is as follows. Catalyzes the transfer of a dimethylallyl group onto the adenine at position 37 in tRNAs that read codons beginning with uridine, leading to the formation of N6-(dimethylallyl)adenosine (i(6)A). This is tRNA dimethylallyltransferase from Carboxydothermus hydrogenoformans (strain ATCC BAA-161 / DSM 6008 / Z-2901).